Consider the following 488-residue polypeptide: Ribulose bisphosphate carboxylase large chain (488 aa).

The substrate site is built by asparagine 127 and threonine 177. Residue lysine 179 is the Proton acceptor of the active site. Substrate is bound at residue lysine 181. Residues lysine 205, aspartate 207, and glutamate 208 each coordinate Mg(2+). Lysine 205 carries the N6-carboxylysine modification. Histidine 297 (proton acceptor) is an active-site residue. The substrate site is built by arginine 298, histidine 330, and serine 382.

Belongs to the RuBisCO large chain family. Type I subfamily. Heterohexadecamer of 8 large chains and 8 small chains. It depends on Mg(2+) as a cofactor.

It is found in the plastid. It localises to the chloroplast. It catalyses the reaction 2 (2R)-3-phosphoglycerate + 2 H(+) = D-ribulose 1,5-bisphosphate + CO2 + H2O. The enzyme catalyses D-ribulose 1,5-bisphosphate + O2 = 2-phosphoglycolate + (2R)-3-phosphoglycerate + 2 H(+). In terms of biological role, ruBisCO catalyzes two reactions: the carboxylation of D-ribulose 1,5-bisphosphate, the primary event in carbon dioxide fixation, as well as the oxidative fragmentation of the pentose substrate in the photorespiration process. Both reactions occur simultaneously and in competition at the same active site. The protein is Ribulose bisphosphate carboxylase large chain (rbcL) of Pyropia dentata (Red alga).